Here is a 210-residue protein sequence, read N- to C-terminus: Chaperone protein TorD (210 aa).

The protein belongs to the TorD/DmsD family. TorD subfamily.

It localises to the cytoplasm. In terms of biological role, involved in the biogenesis of TorA. Acts on TorA before the insertion of the molybdenum cofactor and, as a result, probably favors a conformation of the apoenzyme that is competent for acquiring the cofactor. This is Chaperone protein TorD from Salmonella schwarzengrund (strain CVM19633).